A 313-amino-acid polypeptide reads, in one-letter code: tRNA uridine(34) hydroxylase (313 aa).

The Rhodanese domain maps to 124 to 218 (SDPEVLLIDT…YLEEVPQQES (95 aa)). The active-site Cysteine persulfide intermediate is Cys178.

Belongs to the TrhO family.

The catalysed reaction is uridine(34) in tRNA + AH2 + O2 = 5-hydroxyuridine(34) in tRNA + A + H2O. Catalyzes oxygen-dependent 5-hydroxyuridine (ho5U) modification at position 34 in tRNAs. The sequence is that of tRNA uridine(34) hydroxylase from Pseudomonas fluorescens (strain ATCC BAA-477 / NRRL B-23932 / Pf-5).